Reading from the N-terminus, the 117-residue chain is Large ribosomal subunit protein uL18 (117 aa).

Belongs to the universal ribosomal protein uL18 family. Part of the 50S ribosomal subunit; part of the 5S rRNA/L5/L18/L25 subcomplex. Contacts the 5S and 23S rRNAs.

Its function is as follows. This is one of the proteins that bind and probably mediate the attachment of the 5S RNA into the large ribosomal subunit, where it forms part of the central protuberance. This Aster yellows witches'-broom phytoplasma (strain AYWB) protein is Large ribosomal subunit protein uL18.